The sequence spans 159 residues: NADH-quinone oxidoreductase subunit B (159 aa).

4 residues coordinate [4Fe-4S] cluster: Cys36, Cys37, Cys102, and Cys132.

Belongs to the complex I 20 kDa subunit family. In terms of assembly, NDH-1 is composed of 14 different subunits. Subunits NuoB, C, D, E, F, and G constitute the peripheral sector of the complex. Requires [4Fe-4S] cluster as cofactor.

Its subcellular location is the cell inner membrane. It carries out the reaction a quinone + NADH + 5 H(+)(in) = a quinol + NAD(+) + 4 H(+)(out). In terms of biological role, NDH-1 shuttles electrons from NADH, via FMN and iron-sulfur (Fe-S) centers, to quinones in the respiratory chain. Couples the redox reaction to proton translocation (for every two electrons transferred, four hydrogen ions are translocated across the cytoplasmic membrane), and thus conserves the redox energy in a proton gradient. This Delftia acidovorans (strain DSM 14801 / SPH-1) protein is NADH-quinone oxidoreductase subunit B.